The following is a 328-amino-acid chain: Beta-ketoacyl-[acyl-carrier-protein] synthase III (328 aa).

Catalysis depends on residues Cys122 and His255. Residues 256–260 (QANIR) are ACP-binding. Asn285 is an active-site residue.

Belongs to the thiolase-like superfamily. FabH family. In terms of assembly, homodimer.

The protein resides in the cytoplasm. The catalysed reaction is malonyl-[ACP] + acetyl-CoA + H(+) = 3-oxobutanoyl-[ACP] + CO2 + CoA. Its pathway is lipid metabolism; fatty acid biosynthesis. Functionally, catalyzes the condensation reaction of fatty acid synthesis by the addition to an acyl acceptor of two carbons from malonyl-ACP. Catalyzes the first condensation reaction which initiates fatty acid synthesis and may therefore play a role in governing the total rate of fatty acid production. Possesses both acetoacetyl-ACP synthase and acetyl transacylase activities. Its substrate specificity determines the biosynthesis of branched-chain and/or straight-chain of fatty acids. The sequence is that of Beta-ketoacyl-[acyl-carrier-protein] synthase III from Janthinobacterium sp. (strain Marseille) (Minibacterium massiliensis).